The following is a 581-amino-acid chain: Leucine-rich repeat transmembrane neuronal protein 3 (581 aa).

The N-terminal stretch at 1–30 (MGFNVIRLLSGSAVALVIAPTVLLTMLSSA) is a signal peptide. The region spanning 31 to 61 (ERGCPKGCRCEGKMVYCESQKLQEIPSSISA) is the LRRNT domain. Topologically, residues 31–419 (ERGCPKGCRC…ADAEHISFHK (389 aa)) are extracellular. LRR repeat units lie at residues 63-83 (CLGL…QFKG), 86-107 (QLTW…AFNG), 110-131 (RLKE…TFRP), 134-155 (NLRN…QFRG), 158-179 (KLLS…IFQD), 182-203 (NLEL…VFAG), 206-226 (RLKE…ALFP), 230-251 (SLQN…MSWT), 254-275 (SLQR…SVFQ), and 279-300 (NLQR…ILDS). N126 carries an N-linked (GlcNAc...) asparagine glycan. Residues 312 to 363 (NIWECSRNICSLVNWLKSFKGLRENTIICASPKELQGVNVIDAVKNYSICGK) form the LRRCT domain. A glycan (N-linked (GlcNAc...) asparagine) is linked at N357. A disordered region spans residues 377-408 (KPTFKPKLPRPKHESKPPLPPTVGATEPGPET). The chain crosses the membrane as a helical span at residues 420–440 (IIAGSVALFLSVLVILLVIYV). At 441-581 (SWKRYPASMK…RISDHKQQLA (141 aa)) the chain is on the cytoplasmic side.

This sequence belongs to the LRRTM family. Expressed in neuronal tissues.

Its subcellular location is the cell membrane. The protein localises to the postsynaptic cell membrane. Exhibits a limited synaptogenic activity in vitro, restricted to excitatory presynaptic differentiation. May play a role in the development and maintenance of the vertebrate nervous system. The sequence is that of Leucine-rich repeat transmembrane neuronal protein 3 (LRRTM3) from Homo sapiens (Human).